The primary structure comprises 318 residues: Aspartate carbamoyltransferase catalytic subunit (318 aa).

The carbamoyl phosphate site is built by Arg-59 and Thr-60. Lys-87 provides a ligand contact to L-aspartate. 3 residues coordinate carbamoyl phosphate: Arg-109, His-137, and Gln-140. L-aspartate contacts are provided by Arg-170 and Arg-224. The carbamoyl phosphate site is built by Gly-265 and Pro-266.

Belongs to the aspartate/ornithine carbamoyltransferase superfamily. ATCase family. As to quaternary structure, heterododecamer (2C3:3R2) of six catalytic PyrB chains organized as two trimers (C3), and six regulatory PyrI chains organized as three dimers (R2).

The catalysed reaction is carbamoyl phosphate + L-aspartate = N-carbamoyl-L-aspartate + phosphate + H(+). Its pathway is pyrimidine metabolism; UMP biosynthesis via de novo pathway; (S)-dihydroorotate from bicarbonate: step 2/3. Its function is as follows. Catalyzes the condensation of carbamoyl phosphate and aspartate to form carbamoyl aspartate and inorganic phosphate, the committed step in the de novo pyrimidine nucleotide biosynthesis pathway. This is Aspartate carbamoyltransferase catalytic subunit from Allorhizobium ampelinum (strain ATCC BAA-846 / DSM 112012 / S4) (Agrobacterium vitis (strain S4)).